A 189-amino-acid chain; its full sequence is Segregation and condensation protein B (189 aa).

Belongs to the ScpB family. Homodimer. Homodimerization may be required to stabilize the binding of ScpA to the Smc head domains. Component of a cohesin-like complex composed of ScpA, ScpB and the Smc homodimer, in which ScpA and ScpB bind to the head domain of Smc. The presence of the three proteins is required for the association of the complex with DNA.

The protein localises to the cytoplasm. In terms of biological role, participates in chromosomal partition during cell division. May act via the formation of a condensin-like complex containing Smc and ScpA that pull DNA away from mid-cell into both cell halves. In Streptococcus pneumoniae serotype 19F (strain G54), this protein is Segregation and condensation protein B.